We begin with the raw amino-acid sequence, 400 residues long: Nicotinate phosphoribosyltransferase (400 aa).

Position 220 is a phosphohistidine; by autocatalysis (His220).

This sequence belongs to the NAPRTase family. Post-translationally, transiently phosphorylated on a His residue during the reaction cycle. Phosphorylation strongly increases the affinity for substrates and increases the rate of nicotinate D-ribonucleotide production. Dephosphorylation regenerates the low-affinity form of the enzyme, leading to product release.

It carries out the reaction nicotinate + 5-phospho-alpha-D-ribose 1-diphosphate + ATP + H2O = nicotinate beta-D-ribonucleotide + ADP + phosphate + diphosphate. Its pathway is cofactor biosynthesis; NAD(+) biosynthesis; nicotinate D-ribonucleotide from nicotinate: step 1/1. In terms of biological role, catalyzes the synthesis of beta-nicotinate D-ribonucleotide from nicotinate and 5-phospho-D-ribose 1-phosphate at the expense of ATP. The sequence is that of Nicotinate phosphoribosyltransferase from Enterobacter sp. (strain 638).